The sequence spans 77 residues: Large ribosomal subunit protein bL28 (77 aa).

A disordered region spans residues 1-26 (MARVCKVTGKRPMSGNNVSHANNKTK).

It belongs to the bacterial ribosomal protein bL28 family.

This chain is Large ribosomal subunit protein bL28, found in Neisseria gonorrhoeae (strain ATCC 700825 / FA 1090).